We begin with the raw amino-acid sequence, 257 residues long: Aspartate/glutamate leucyltransferase (257 aa).

It belongs to the R-transferase family. Bpt subfamily.

It is found in the cytoplasm. The enzyme catalyses N-terminal L-glutamyl-[protein] + L-leucyl-tRNA(Leu) = N-terminal L-leucyl-L-glutamyl-[protein] + tRNA(Leu) + H(+). It carries out the reaction N-terminal L-aspartyl-[protein] + L-leucyl-tRNA(Leu) = N-terminal L-leucyl-L-aspartyl-[protein] + tRNA(Leu) + H(+). In terms of biological role, functions in the N-end rule pathway of protein degradation where it conjugates Leu from its aminoacyl-tRNA to the N-termini of proteins containing an N-terminal aspartate or glutamate. The polypeptide is Aspartate/glutamate leucyltransferase (Rhodopseudomonas palustris (strain HaA2)).